The sequence spans 282 residues: NADPH-dependent 7-cyano-7-deazaguanine reductase (282 aa).

A substrate-binding site is contributed by 88 to 90 (IES). 90–91 (SK) is a binding site for NADPH. Cys190 serves as the catalytic Thioimide intermediate. Asp197 acts as the Proton donor in catalysis. 229-230 (HE) contributes to the substrate binding site. 258-259 (RG) serves as a coordination point for NADPH.

Belongs to the GTP cyclohydrolase I family. QueF type 2 subfamily. Homodimer.

The protein localises to the cytoplasm. It carries out the reaction 7-aminomethyl-7-carbaguanine + 2 NADP(+) = 7-cyano-7-deazaguanine + 2 NADPH + 3 H(+). It participates in tRNA modification; tRNA-queuosine biosynthesis. In terms of biological role, catalyzes the NADPH-dependent reduction of 7-cyano-7-deazaguanine (preQ0) to 7-aminomethyl-7-deazaguanine (preQ1). In Salmonella schwarzengrund (strain CVM19633), this protein is NADPH-dependent 7-cyano-7-deazaguanine reductase.